The following is a 276-amino-acid chain: Energy-coupling factor transporter ATP-binding protein EcfA1 (276 aa).

In terms of domain architecture, ABC transporter spans 2–237 (IEIKNLKFKY…GSELVDLGLD (236 aa)). Residue 37–44 (GHNGSGKS) participates in ATP binding.

This sequence belongs to the ABC transporter superfamily. Energy-coupling factor EcfA family. Forms a stable energy-coupling factor (ECF) transporter complex composed of 2 membrane-embedded substrate-binding proteins (S component), 2 ATP-binding proteins (A component) and 2 transmembrane proteins (T component).

The protein resides in the cell membrane. Functionally, ATP-binding (A) component of a common energy-coupling factor (ECF) ABC-transporter complex. Unlike classic ABC transporters this ECF transporter provides the energy necessary to transport a number of different substrates. In Streptococcus thermophilus (strain ATCC BAA-491 / LMD-9), this protein is Energy-coupling factor transporter ATP-binding protein EcfA1.